Consider the following 345-residue polypeptide: Serpentine receptor class beta-5 (345 aa).

Over 1 to 22 (MAEINQTKCDLAFQISYHPIYR) the chain is Extracellular. A glycan (N-linked (GlcNAc...) asparagine) is linked at Asn-5. The chain crosses the membrane as a helical span at residues 23-43 (LAQFWTLSVSLLAVPSLLYFL). Over 44–57 (LKRVLLLPFHGNLK) the chain is Cytoplasmic. Residues 58–78 (CLLITYFSSIFLYALVLCFDF) traverse the membrane as a helical segment. The Extracellular segment spans residues 79–103 (SYQCLIPFIVTTKCSLIIDQTLYKC). A helical membrane pass occupies residues 104 to 124 (GHMTSLFFLTTPMLLPFGFSI). Residues 125-142 (ERFVAVGMAYKYEKMRTL) lie on the Cytoplasmic side of the membrane. The chain crosses the membrane as a helical span at residues 143–163 (LGPILCFILVAPNFVVFYFLF). Residues 164–189 (RDEQFTDSFISFLVLPNTPAVQFNNY) are Extracellular-facing. The chain crosses the membrane as a helical span at residues 190–210 (LWFLLYAKIGNFCCNCVLLIF). Residues 211–241 (HKRFKNTYLKKKTSLSVRYALEEISNSSKFT) lie on the Cytoplasmic side of the membrane. Residues 242-262 (LILTFTHLVFFGAYTIGSILV) form a helical membrane-spanning segment. Residues 263-280 (RTLGESFFGNFLNFYVAR) lie on the Extracellular side of the membrane. Residues 281 to 301 (GVNCAVPTYNLLIAFVGLISL) form a helical membrane-spanning segment. The Cytoplasmic portion of the chain corresponds to 302–345 (RQLNSRRHAKILTKVLIRVTGQEGARNYDDIIMQQWNTVSNRTR).

This sequence belongs to the nematode receptor-like protein srb family. In terms of tissue distribution, expressed throughout the head.

It localises to the cell membrane. The protein localises to the perikaryon. Its subcellular location is the cell projection. The protein resides in the dendrite. Its function is as follows. G-protein coupled receptor. Plays a role in the navigational capacity of sperm and promotes the targeting of sperm derived from males to the fertilization site in the uterus of hermaphrodites. The sequence is that of Serpentine receptor class beta-5 from Caenorhabditis elegans.